The sequence spans 180 residues: Der GTPase-activating protein YihI (180 aa).

Disordered stretches follow at residues 1–88 (MTRK…KERR) and 147–180 (PEVT…FGKE). 4 stretches are compositionally biased toward basic and acidic residues: residues 18-33 (FREK…ARKS), 50-67 (EALD…DPRL), 77-88 (VEKKPTTKKERR), and 153-163 (APVRKGAKTDE). Acidic residues predominate over residues 164–173 (DLLDQFENMD).

It belongs to the YihI family. Interacts with Der.

In terms of biological role, a GTPase-activating protein (GAP) that modifies Der/EngA GTPase function. May play a role in ribosome biogenesis. In Photobacterium profundum (strain SS9), this protein is Der GTPase-activating protein YihI.